The primary structure comprises 241 residues: Transcriptional regulatory protein SrrA (241 aa).

The Response regulatory domain occupies 4 to 117; that stretch reads EILIVDDEDR…EVVLRVKALL (114 aa). At D53 the chain carries 4-aspartylphosphate. The segment at residues 133-233 is a DNA-binding region (ompR/PhoB-type); it reads RDVIEFKHLE…VWGVGYKFEV (101 aa).

Post-translationally, phosphorylated by SrrB.

The protein localises to the cytoplasm. Functionally, member of the two-component regulatory system SrrA/SrrB, which is involved in the global regulation of staphylococcal virulence factors in response to environmental oxygen levels as well as biofilm formation. Also plays an essential role in host-derived nitric oxide resistance by regulating hmp/flavohemoglobin, an enzyme that detoxifies nitric oxide by converting it to nitrate. Functions as a transcription regulator by direct binding to promoter regions of target genes. The chain is Transcriptional regulatory protein SrrA (srrA) from Staphylococcus aureus (strain NCTC 8325 / PS 47).